The chain runs to 134 residues: Profilin-1 (134 aa).

The cysteines at positions 13 and 118 are disulfide-linked. An Involved in PIP2 interaction motif is present at residues 84–100 (AVIRGKKGSGGITIKKT). Thr-114 carries the post-translational modification Phosphothreonine.

This sequence belongs to the profilin family. Occurs in many kinds of cells as a complex with monomeric actin in a 1:1 ratio. In terms of processing, phosphorylated by MAP kinases.

It localises to the cytoplasm. Its subcellular location is the cytoskeleton. Its function is as follows. Binds to actin and affects the structure of the cytoskeleton. At high concentrations, profilin prevents the polymerization of actin, whereas it enhances it at low concentrations. This chain is Profilin-1, found in Olea europaea (Common olive).